The primary structure comprises 513 residues: Cytochrome P450 monooxygenase CYP3 (513 aa).

The tract at residues 1–21 is disordered; sequence MLPRSLGHSTSELSPPFDGPN. Residue C451 participates in heme binding.

The protein belongs to the cytochrome P450 family. The cofactor is heme.

Its pathway is secondary metabolite biosynthesis. In terms of biological role, cytochrome P450 monooxygenase; part of the gene cluster that mediates the biosynthesis of a tyrosine-derived cytochalasan acting as a fungal signal recognized by resistant rice plants and leads to avirulence in Pi33 resistant rice cultivars. The first step in the pathway is catalyzed by the hybrid PKS-NRPS ACE1, assisted by the enoyl reductase RAP1, that are responsible for fusion of the tyrosine precursor and the polyketide backbone. The polyketide synthase module (PKS) of ACE1 is responsible for the synthesis of the polyketide backbone and the downstream nonribosomal peptide synthetase (NRPS) amidates the carboxyl end of the polyketide with the tyrosine precursor. Because ACE1 lacks a designated enoylreductase (ER) domain, the required activity is provided the enoyl reductase RAP1. Reduction by the hydrolyase ORFZ, followed by dehydration and intra-molecular Diels-Alder cyclization by the Diels-Alderase ORF3 then yield the required isoindolone-fused macrocycle. A number of oxidative steps catalyzed by the tailoring enzymes identified within the cluster, including cytochrome P450 monooxygenases CYP1 to CYP4, the FAD-linked oxidoreductase OXR2 and the short-chain dehydrogenase/reductase OXR1, are further required to afford the final cytochalasans that confer avirulence and which have still to be identified. The monooxygenase CYP1 has been shown to be a site-selective C-18 hydroxylase whereas the function of CYP3 is the site-selective epoxidation of the C-6/C-7 olefin that is present in some intermediate compounds. Finally, SYN2 and RAP2 are not required for avirulence in Pi33 resistant rice cultivars. In Pyricularia oryzae (strain 70-15 / ATCC MYA-4617 / FGSC 8958) (Rice blast fungus), this protein is Cytochrome P450 monooxygenase CYP3.